The chain runs to 441 residues: Ribosomal protein uS12 methylthiotransferase RimO (441 aa).

The region spanning 5-116 (PTIAFTHLGC…IVDVMQRVEK (112 aa)) is the MTTase N-terminal domain. Residues cysteine 14, cysteine 50, cysteine 79, cysteine 154, cysteine 158, and cysteine 161 each coordinate [4Fe-4S] cluster. Positions 140–370 (TTSEGVAYVR…EVQQSISWQQ (231 aa)) constitute a Radical SAM core domain. In terms of domain architecture, TRAM spans 372 to 438 (QKLVGQLVDV…IYDLYGCLIS (67 aa)).

It belongs to the methylthiotransferase family. RimO subfamily. Requires [4Fe-4S] cluster as cofactor.

It localises to the cytoplasm. The enzyme catalyses L-aspartate(89)-[ribosomal protein uS12]-hydrogen + (sulfur carrier)-SH + AH2 + 2 S-adenosyl-L-methionine = 3-methylsulfanyl-L-aspartate(89)-[ribosomal protein uS12]-hydrogen + (sulfur carrier)-H + 5'-deoxyadenosine + L-methionine + A + S-adenosyl-L-homocysteine + 2 H(+). Functionally, catalyzes the methylthiolation of an aspartic acid residue of ribosomal protein uS12. This Trichodesmium erythraeum (strain IMS101) protein is Ribosomal protein uS12 methylthiotransferase RimO.